The primary structure comprises 301 residues: 4-hydroxy-tetrahydrodipicolinate synthase (301 aa).

Threonine 46 provides a ligand contact to pyruvate. Tyrosine 134 functions as the Proton donor/acceptor in the catalytic mechanism. Lysine 162 serves as the catalytic Schiff-base intermediate with substrate. Residue isoleucine 203 participates in pyruvate binding.

This sequence belongs to the DapA family. Homotetramer; dimer of dimers.

The protein localises to the cytoplasm. The catalysed reaction is L-aspartate 4-semialdehyde + pyruvate = (2S,4S)-4-hydroxy-2,3,4,5-tetrahydrodipicolinate + H2O + H(+). Its pathway is amino-acid biosynthesis; L-lysine biosynthesis via DAP pathway; (S)-tetrahydrodipicolinate from L-aspartate: step 3/4. Its function is as follows. Catalyzes the condensation of (S)-aspartate-beta-semialdehyde [(S)-ASA] and pyruvate to 4-hydroxy-tetrahydrodipicolinate (HTPA). The sequence is that of 4-hydroxy-tetrahydrodipicolinate synthase from Anaplasma marginale (strain St. Maries).